Here is a 1201-residue protein sequence, read N- to C-terminus: Vitamin B12-dependent ribonucleotide reductase (1201 aa).

Residues Ser-153, 198–199 (AC), Gly-230, 482–486 (NPCSE), and 683–687 (PTGTI) contribute to the substrate site. Cys-199 and Cys-495 are oxidised to a cystine. Catalysis depends on Asn-482, which acts as the Proton acceptor. Cys-484 (cysteine radical intermediate) is an active-site residue. Glu-486 serves as the catalytic Proton acceptor. The segment covering 1100 to 1118 (DEIGSKRATAESNGQEKET) has biased composition (basic and acidic residues). A disordered region spans residues 1100-1120 (DEIGSKRATAESNGQEKETLS).

It belongs to the ribonucleoside diphosphate reductase class-2 family. Adenosylcob(III)alamin serves as cofactor.

The enzyme catalyses a 2'-deoxyribonucleoside 5'-diphosphate + [thioredoxin]-disulfide + H2O = a ribonucleoside 5'-diphosphate + [thioredoxin]-dithiol. In terms of biological role, catalyzes the reduction of ribonucleotides to deoxyribonucleotides. May function to provide a pool of deoxyribonucleotide precursors for DNA repair during oxygen limitation and/or for immediate growth after restoration of oxygen. In Leptospira interrogans serogroup Icterohaemorrhagiae serovar copenhageni (strain Fiocruz L1-130), this protein is Vitamin B12-dependent ribonucleotide reductase (nrdJ).